Consider the following 239-residue polypeptide: Secreted effector CFEM9 (239 aa).

The N-terminal stretch at 1–18 (MRVLKFLSLMAMLGCTIG) is a signal peptide. A CFEM domain is found at 19-125 (QSGSATPGSL…DALRRREDEY (107 aa)). 4 cysteine pairs are disulfide-bonded: Cys43-Cys82, Cys47-Cys77, Cys57-Cys63, and Cys65-Cys98. A heme-binding site is contributed by Asp60. Positions 187 to 199 (KSATTTEATRNTV) are enriched in polar residues. The segment at 187 to 216 (KSATTTEATRNTVPASTTAPSPSPQLYTGN) is disordered. The GPI-anchor amidated glycine moiety is linked to residue Gly215. A glycan (N-linked (GlcNAc...) asparagine) is linked at Asn216. The propeptide at 216-239 (NASTSRATVSLTVVLTVAAVYLVL) is removed in mature form.

The protein belongs to the RBT5 family.

It is found in the cell membrane. The protein resides in the secreted. The protein localises to the host nucleus. Its subcellular location is the host cell membrane. In terms of biological role, appears to function during host infection, and may play a role in suppressing the host immune response. The sequence is that of Secreted effector CFEM9 from Marssonina brunnea f. sp. multigermtubi (strain MB_m1) (Marssonina leaf spot fungus).